The chain runs to 776 residues: Homoaconitase, mitochondrial (776 aa).

The transit peptide at 1-24 (MVALRRAVALNAVAIARLQTRALT) directs the protein to the mitochondrion. [4Fe-4S] cluster is bound by residues cysteine 392, cysteine 459, and cysteine 462.

This sequence belongs to the aconitase/IPM isomerase family. The cofactor is [4Fe-4S] cluster.

The protein localises to the mitochondrion. It catalyses the reaction (2R,3S)-homoisocitrate = cis-homoaconitate + H2O. It participates in amino-acid biosynthesis; L-lysine biosynthesis via AAA pathway; L-alpha-aminoadipate from 2-oxoglutarate: step 3/5. Catalyzes the reversible hydration of cis-homoaconitate to (2R,3S)-homoisocitrate, a step in the alpha-aminoadipate pathway for lysine biosynthesis. This chain is Homoaconitase, mitochondrial (LYS4), found in Gibberella zeae (strain ATCC MYA-4620 / CBS 123657 / FGSC 9075 / NRRL 31084 / PH-1) (Wheat head blight fungus).